The primary structure comprises 162 residues: Tegument protein BLRF2 (162 aa).

A coiled-coil region spans residues 12 to 43; the sequence is VKAVDMSMEDMAARLARLESENKALKQQVLRG. Positions 121 to 162 are disordered; it reads GAKGQPSPGEGTRLRESNDPNATRRARSRSRGREAKKVQISD. Positions 151 to 162 are enriched in basic and acidic residues; that stretch reads RGREAKKVQISD.

It belongs to the herpesviridae BLRF2 family. As to quaternary structure, homooligomer; homooligomerizes and binds double-stranded DNA (dsDNA) cooperatively. Interacts with host CGAS.

It localises to the virion tegument. The protein localises to the host cytoplasm. Its function is as follows. Plays a role in the inhibition of host innate immune system by targeting the CGAS enzymatic activity which is the principal cytosolic DNA sensor that detects invading viral DNA. Acts by inhibiting CGAS-DNA phase separation: directly binds double-stranded DNA (dsDNA) in a length dependent but sequence independent manner and is able to form DNA-induced phase separation in infected cells. DNA phase separation of ORF52 mediates disruption of liquid-like droplets in which CGAS is activated, thereby preventing CGAS activity. The protein is Tegument protein BLRF2 of Epstein-Barr virus (strain GD1) (HHV-4).